A 199-amino-acid polypeptide reads, in one-letter code: Peptidyl-tRNA hydrolase (199 aa).

Tyr15 serves as a coordination point for tRNA. His20 acts as the Proton acceptor in catalysis. 3 residues coordinate tRNA: Tyr66, Asn68, and Asn114.

The protein belongs to the PTH family. Monomer.

Its subcellular location is the cytoplasm. The catalysed reaction is an N-acyl-L-alpha-aminoacyl-tRNA + H2O = an N-acyl-L-amino acid + a tRNA + H(+). Hydrolyzes ribosome-free peptidyl-tRNAs (with 1 or more amino acids incorporated), which drop off the ribosome during protein synthesis, or as a result of ribosome stalling. Functionally, catalyzes the release of premature peptidyl moieties from peptidyl-tRNA molecules trapped in stalled 50S ribosomal subunits, and thus maintains levels of free tRNAs and 50S ribosomes. The polypeptide is Peptidyl-tRNA hydrolase (Burkholderia cenocepacia (strain ATCC BAA-245 / DSM 16553 / LMG 16656 / NCTC 13227 / J2315 / CF5610) (Burkholderia cepacia (strain J2315))).